The primary structure comprises 229 residues: Heptaprenylglyceryl phosphate synthase (229 aa).

Mg(2+) contacts are provided by Asp13 and Thr39.

Belongs to the GGGP/HepGP synthase family. In terms of assembly, homodimer. It depends on Mg(2+) as a cofactor.

The catalysed reaction is sn-glycerol 1-phosphate + all-trans-heptaprenyl diphosphate = 3-heptaprenyl-sn-glycero-1-phosphate + diphosphate. Its pathway is membrane lipid metabolism; glycerophospholipid metabolism. Prenyltransferase that catalyzes in vivo the transfer of the heptaprenyl moiety of heptaprenyl pyrophosphate (HepPP; 35 carbon atoms) to the C3 hydroxyl of sn-glycerol-1-phosphate (G1P), producing heptaprenylglyceryl phosphate (HepGP). This reaction is an ether-bond-formation step in the biosynthesis of archaea-type G1P-based membrane lipids found in Bacillales. This is Heptaprenylglyceryl phosphate synthase from Lysinibacillus sphaericus (strain C3-41).